Here is a 135-residue protein sequence, read N- to C-terminus: Probable disulfide formation protein (135 aa).

The chain crosses the membrane as a helical span at residues 7–26; the sequence is SYCLYFAWLVSCIGTLMSVY. An intrachain disulfide couples cysteine 36 to cysteine 39. The next 2 helical transmembrane spans lie at 41-60 and 67-84; these read YQRI…AYLD and YALP…YQVC. Cysteines 96 and 101 form a disulfide. Residues 109–131 traverse the membrane as a helical segment; the sequence is GFITMPMASALAFFAIANLLIFA.

Belongs to the DsbB family. BdbC subfamily.

It localises to the cell inner membrane. Required for disulfide bond formation in some proteins. In Chlamydia muridarum (strain MoPn / Nigg), this protein is Probable disulfide formation protein.